A 289-amino-acid polypeptide reads, in one-letter code: Agmatinase (289 aa).

Residues His-112, Asp-135, His-137, Asp-139, Asp-216, and Asp-218 each contribute to the Mn(2+) site.

This sequence belongs to the arginase family. Agmatinase subfamily. It depends on Mn(2+) as a cofactor.

The catalysed reaction is agmatine + H2O = urea + putrescine. The protein operates within amine and polyamine biosynthesis; putrescine biosynthesis via agmatine pathway; putrescine from agmatine: step 1/1. Functionally, catalyzes the formation of putrescine from agmatine. This Halalkalibacterium halodurans (strain ATCC BAA-125 / DSM 18197 / FERM 7344 / JCM 9153 / C-125) (Bacillus halodurans) protein is Agmatinase (speB).